The sequence spans 336 residues: Large ribosomal subunit protein uL1m (336 aa).

A mitochondrion-targeting transit peptide spans 1–50; sequence MAAAVRCLRRVLIHHQRHCLCKMASQASLYPCSVNSLLHNRHFAAAAAAA. At serine 85 the chain carries Phosphoserine.

Belongs to the universal ribosomal protein uL1 family.

The protein localises to the mitochondrion. In Mus musculus (Mouse), this protein is Large ribosomal subunit protein uL1m (Mrpl1).